A 215-amino-acid polypeptide reads, in one-letter code: Nascent polypeptide-associated complex subunit alpha-2 (215 aa).

Positions 1 to 51 are disordered; sequence MPGEATETVPATEQELPQSQAETGSGTASDSGESVPGIEEQDSTQTTTQKA. Residues 9–32 show a composition bias toward polar residues; it reads VPATEQELPQSQAETGSGTASDSG. Residues serine 43 and serine 132 each carry the phosphoserine modification. Residues 70 to 135 form the NAC-A/B domain; the sequence is SRSEKRARKA…AKIQDLSQQA (66 aa). An N6-acetyllysine; alternate modification is found at lysine 142. Lysine 142 is covalently cross-linked (Glycyl lysine isopeptide (Lys-Gly) (interchain with G-Cter in SUMO2); alternate). Threonine 161 bears the Phosphothreonine mark. 4 positions are modified to phosphoserine: serine 166, serine 186, serine 191, and serine 203. The UBA domain occupies 176 to 213; it reads VEVKDVKLVMSQANVSRAKAVRALKNNSNDIVNAIMEL. Position 214 is a phosphothreonine (threonine 214).

Belongs to the NAC-alpha family. As to quaternary structure, part of the nascent polypeptide-associated complex (NAC), consisting of NACA and BTF3. NAC associates with ribosomes through the BTF3 subunit. Both subunits can contact nascent polypeptide chains. In terms of tissue distribution, expressed specifically in testis and skeletal muscle.

It is found in the cytoplasm. Its subcellular location is the nucleus. Functionally, prevents inappropriate targeting of non-secretory polypeptides to the endoplasmic reticulum (ER). Binds to nascent polypeptide chains as they emerge from the ribosome and blocks their interaction with the signal recognition particle (SRP), which normally targets nascent secretory peptides to the ER. Also reduces the inherent affinity of ribosomes for protein translocation sites in the ER membrane (M sites). The protein is Nascent polypeptide-associated complex subunit alpha-2 (NACA2) of Homo sapiens (Human).